The following is a 942-amino-acid chain: Diacylglycerol kinase theta (942 aa).

The segment at 1 to 59 (MAAAAEPGARAWLGGGSPRPGSPACSPVLGSGGRARPGPGPGPGPERAGVRAPGPAAAP) is disordered. 2 positions are modified to phosphoserine: S22 and S26. The segment covering 45–59 (PERAGVRAPGPAAAP) has biased composition (low complexity). 3 consecutive Phorbol-ester/DAG-type zinc fingers follow at residues 60–108 (GHSF…RIPC), 121–168 (AHCF…CSDC), and 183–234 (HHHW…APEC). The tract at residues 269–295 (EPGEGGDGADGSAAVGPGRETQATPES) is disordered. The 100-residue stretch at 395–494 (AQEVLKIYPG…TRFYVAESRD (100 aa)) folds into the Ras-associating domain. 2 short sequence motifs (LXXLL motif) span residues 555–559 (LYMLL) and 574–578 (LPDLL). In terms of domain architecture, DAGKc spans 584 to 721 (PDSCPLLVFV…MDRWTILLDA (138 aa)). The interval 908 to 942 (PKVHMLRKAKQKPRRAGTTRDARADAAPAPESDPR) is disordered. Residues 911 to 924 (HMLRKAKQKPRRAG) show a composition bias toward basic residues. The span at 932–942 (DAAPAPESDPR) shows a compositional bias: low complexity.

The protein belongs to the eukaryotic diacylglycerol kinase family. As to quaternary structure, interacts with RHOA (constitutively activated, GTP-bound); the interaction inhibits DGKQ. Interacts with PRKCE. Interacts with PRKCH. Interacts with PLCB1. Interacts with NR5A1; the interaction requires both LXXLL motifs in DGKQ and is required for full phosphatidic acid-mediated activation of NR5A1. In terms of processing, phosphorylated by PRKCE and PRKCH in vitro.

It is found in the cytoplasm. The protein localises to the cytosol. Its subcellular location is the cell membrane. The protein resides in the synapse. It localises to the cytoskeleton. It is found in the nucleus. The protein localises to the nucleus speckle. Its subcellular location is the nucleus matrix. It catalyses the reaction a 1,2-diacyl-sn-glycerol + ATP = a 1,2-diacyl-sn-glycero-3-phosphate + ADP + H(+). The catalysed reaction is a 1-O-alkyl-sn-glycerol + ATP = a 1-O-alkyl-sn-glycero-3-phosphate + ADP + H(+). The enzyme catalyses 1-O-alkyl-2-acyl-sn-glycerol + ATP = 1-O-alkyl-2-acyl-sn-glycero-3-phosphate + ADP + H(+). It carries out the reaction 1,2-di-(9Z-octadecenoyl)-sn-glycerol + ATP = 1,2-di-(9Z-octadecenoyl)-sn-glycero-3-phosphate + ADP + H(+). It catalyses the reaction 1-O-hexadecyl-sn-glycerol + ATP = 1-O-hexadecyl-sn-glycero-3-phosphate + ADP + H(+). The catalysed reaction is 1-O-hexadecyl-2-acetyl-sn-glycerol + ATP = 1-O-hexadecyl-2-acetyl-sn-glycero-3-phosphate + ADP + H(+). The enzyme catalyses 1-octadecanoyl-2-(5Z,8Z,11Z,14Z-eicosatetraenoyl)-sn-glycerol + ATP = 1-octadecanoyl-2-(5Z,8Z,11Z,14Z-eicosatetraenoyl)-sn-glycero-3-phosphate + ADP + H(+). It participates in lipid metabolism; glycerolipid metabolism. With respect to regulation, activated by phosphatidylserine. Diacylglycerol kinase that converts diacylglycerol/DAG into phosphatidic acid/phosphatidate/PA and regulates the respective levels of these two bioactive lipids. Thereby, acts as a central switch between the signaling pathways activated by these second messengers with different cellular targets and opposite effects in numerous biological processes. Within the adrenocorticotropic hormone signaling pathway, produces phosphatidic acid which in turn activates NR5A1 and subsequent steroidogenic gene transcription. Also functions downstream of the nerve growth factor signaling pathway being specifically activated in the nucleus by the growth factor. Through its diacylglycerol activity also regulates synaptic vesicle endocytosis. The polypeptide is Diacylglycerol kinase theta (Homo sapiens (Human)).